A 1978-amino-acid chain; its full sequence is Dedicator of cytokinesis protein 4 (1978 aa).

One can recognise an SH3 domain in the interval 6-67; sequence EHEKYGVVIA…PSSYVHLKNA (62 aa). A Phosphotyrosine modification is found at tyrosine 167. Threonine 193 carries the post-translational modification Phosphothreonine. The C2 DOCK-type domain maps to 401-574; the sequence is RNDLYITVER…ESFWITSFLC (174 aa). The 407-residue stretch at 1199–1605 folds into the DOCKER domain; that stretch reads KTELNKEEMY…FGIQEFPACI (407 aa). Phosphoserine is present on residues serine 1608, serine 1616, serine 1623, serine 1627, serine 1629, and serine 1640. 2 disordered regions span residues 1657–1738 and 1751–1978; these read SQAS…IYPT and IGDG…VSQL. Over residues 1681–1712 the composition is skewed to low complexity; sequence PSPSTSSLSSTHSASPNVTSSAPSSARASPLL. Serine 1778 carries the post-translational modification Phosphoserine. An SH3-binding motif is present at residues 1797-1803; the sequence is PPVPPRP. The span at 1804-1818 shows a compositional bias: polar residues; it reads TQTASPARHTTSVSP. Residues 1842–1872 are compositionally biased toward low complexity; it reads SPGLSSNSPVLSGSYSSGISSLSRCSTSETS. The span at 1873-1882 shows a compositional bias: polar residues; sequence GFENQANEQS. The segment covering 1885–1895 has biased composition (pro residues); the sequence is VPVPVPVPVPV. Residues 1953 to 1966 are compositionally biased toward basic and acidic residues; it reads SHLENGTRRTEPGP.

This sequence belongs to the DOCK family. As to quaternary structure, interacts with nucleotide-free Rap1; functions as a guanine nucleotide exchange factor (GEF) for Rap1. Interacts (via DOCKER domain) with RAC1; functions as a guanine nucleotide exchange factor (GEF) for RAC1. Interacts with the SH3 domain of CRK. Interacts with FASLG. Interacts with ELMO2 and EPHA2; mediates activation of RAC1 by EPHA2. Interacts with USH1C (via PDZ 1 domain). Expressed in inner ear (at protein level).

Its subcellular location is the cell membrane. The protein resides in the cytoplasm. It localises to the cytosol. Its function is as follows. Functions as a guanine nucleotide exchange factor (GEF) that promotes the exchange of GDP to GTP, converting inactive GDP-bound small GTPases into their active GTP-bound form. Involved in regulation of adherens junction between cells. Plays a role in cell migration. Functionally, has a higher guanine nucleotide exchange factor activity compared to other isoforms. In Mus musculus (Mouse), this protein is Dedicator of cytokinesis protein 4 (Dock4).